The primary structure comprises 474 residues: tRNA-2-methylthio-N(6)-dimethylallyladenosine synthase (474 aa).

Positions 3 to 120 (KKLHIKTWGC…LPDMIDQVRR (118 aa)) constitute an MTTase N-terminal domain. Residues cysteine 12, cysteine 49, cysteine 83, cysteine 157, cysteine 161, and cysteine 164 each coordinate [4Fe-4S] cluster. The Radical SAM core domain maps to 143 to 375 (RAEGPTAFVS…QDRITQQAMR (233 aa)). Residues 378 to 441 (RHMMGTVQRI…TNSLRGKFIR (64 aa)) form the TRAM domain.

It belongs to the methylthiotransferase family. MiaB subfamily. As to quaternary structure, monomer. The cofactor is [4Fe-4S] cluster.

It localises to the cytoplasm. It catalyses the reaction N(6)-dimethylallyladenosine(37) in tRNA + (sulfur carrier)-SH + AH2 + 2 S-adenosyl-L-methionine = 2-methylsulfanyl-N(6)-dimethylallyladenosine(37) in tRNA + (sulfur carrier)-H + 5'-deoxyadenosine + L-methionine + A + S-adenosyl-L-homocysteine + 2 H(+). In terms of biological role, catalyzes the methylthiolation of N6-(dimethylallyl)adenosine (i(6)A), leading to the formation of 2-methylthio-N6-(dimethylallyl)adenosine (ms(2)i(6)A) at position 37 in tRNAs that read codons beginning with uridine. This Shewanella sp. (strain ANA-3) protein is tRNA-2-methylthio-N(6)-dimethylallyladenosine synthase.